An 848-amino-acid chain; its full sequence is Beta-galactosidase 11 (848 aa).

The N-terminal stretch at 1 to 23 (MSAAAVLAVVAAAVAALAAAASG) is a signal peptide. The N-linked (GlcNAc...) asparagine glycan is linked to asparagine 29. Catalysis depends on glutamate 189, which acts as the Proton donor. Glutamate 260 (nucleophile) is an active-site residue. Residues asparagine 261, asparagine 472, and asparagine 783 are each glycosylated (N-linked (GlcNAc...) asparagine). An SUEL-type lectin domain is found at 750-837 (GGLKPTAVLS…GTLAVQAKCS (88 aa)).

Belongs to the glycosyl hydrolase 35 family.

The protein resides in the secreted. It is found in the extracellular space. The protein localises to the apoplast. It catalyses the reaction Hydrolysis of terminal non-reducing beta-D-galactose residues in beta-D-galactosides.. This Oryza sativa subsp. japonica (Rice) protein is Beta-galactosidase 11.